The following is a 190-amino-acid chain: Elongation factor P-like protein (190 aa).

The protein belongs to the elongation factor P family.

The sequence is that of Elongation factor P-like protein from Pseudoalteromonas atlantica (strain T6c / ATCC BAA-1087).